The chain runs to 432 residues: CBL-interacting serine/threonine-protein kinase 17 (432 aa).

The region spanning 11 to 266 (YELGRTLGEG…IAGIKAHDWF (256 aa)) is the Protein kinase domain. Residues 17–25 (LGEGNSAKV) and Lys40 contribute to the ATP site. The active-site Proton acceptor is Asp134. The interval 152 to 181 (DFGLSALSQHYREDGLLHTTCGSPNYVAPE) is activation loop. Phosphoserine is present on Ser156. A Phosphothreonine modification is found at Thr170. Positions 301 to 325 (DSPTIINAFQLIGMSSFLDLSGFFE) constitute an NAF domain. The interval 331-360 (ERQIRFTSNSLAKDLLENIETIFTEMGFCL) is PPI.

It belongs to the protein kinase superfamily. CAMK Ser/Thr protein kinase family. SNF1 subfamily. In terms of assembly, interacts with CBL1. The cofactor is Mn(2+).

The catalysed reaction is L-seryl-[protein] + ATP = O-phospho-L-seryl-[protein] + ADP + H(+). The enzyme catalyses L-threonyl-[protein] + ATP = O-phospho-L-threonyl-[protein] + ADP + H(+). Functionally, CIPK serine-threonine protein kinases interact with CBL proteins. Binding of a CBL protein to the regulatory NAF domain of CIPK protein lead to the activation of the kinase in a calcium-dependent manner. This Arabidopsis thaliana (Mouse-ear cress) protein is CBL-interacting serine/threonine-protein kinase 17 (CIPK17).